A 172-amino-acid chain; its full sequence is Ribosome maturation factor RimM (172 aa).

One can recognise a PRC barrel domain in the interval 95-168 (AEGEFYYHQI…RVDVEIMEGL (74 aa)).

It belongs to the RimM family. Binds ribosomal protein uS19.

The protein resides in the cytoplasm. An accessory protein needed during the final step in the assembly of 30S ribosomal subunit, possibly for assembly of the head region. Essential for efficient processing of 16S rRNA. May be needed both before and after RbfA during the maturation of 16S rRNA. It has affinity for free ribosomal 30S subunits but not for 70S ribosomes. This chain is Ribosome maturation factor RimM, found in Streptococcus equi subsp. zooepidemicus (strain H70).